Reading from the N-terminus, the 223-residue chain is Transcriptional regulatory protein HprR (223 aa).

One can recognise a Response regulatory domain in the interval 2–115 (KILLIEDNQR…ELLARVRAQL (114 aa)). Asp51 bears the 4-aspartylphosphate mark. A DNA-binding region (ompR/PhoB-type) is located at residues 122–220 (NSTLEISGLR…IRGMGYSFVA (99 aa)).

Phosphorylated by HprS.

Its subcellular location is the cytoplasm. Member of a two-component regulatory system HprR/HprS involved in response to hydrogen peroxide. Regulates the expression of at least 5 operons, cyoABCDE, hprRS, hiuH, cusRS and cusCFBA. Bifunctional regulator that acts as an activator and a repressor. The chain is Transcriptional regulatory protein HprR from Escherichia coli (strain K12).